The sequence spans 347 residues: Putative adhesin P1-like protein MPN_099 (347 aa).

The segment covering 282–300 has biased composition (polar residues); sequence FGTDHSTQPQPQSLKTTTP. The segment at 282–302 is disordered; the sequence is FGTDHSTQPQPQSLKTTTPVF.

Belongs to the adhesin P1 family.

The sequence is that of Putative adhesin P1-like protein MPN_099 from Mycoplasma pneumoniae (strain ATCC 29342 / M129 / Subtype 1) (Mycoplasmoides pneumoniae).